The chain runs to 258 residues: Proteasome subunit alpha (258 aa).

Belongs to the peptidase T1A family. The 20S proteasome core is composed of 14 alpha and 14 beta subunits that assemble into four stacked heptameric rings, resulting in a barrel-shaped structure. The two inner rings, each composed of seven catalytic beta subunits, are sandwiched by two outer rings, each composed of seven alpha subunits. The catalytic chamber with the active sites is on the inside of the barrel. Has a gated structure, the ends of the cylinder being occluded by the N-termini of the alpha-subunits. Is capped by the proteasome-associated ATPase, ARC.

The protein resides in the cytoplasm. Its pathway is protein degradation; proteasomal Pup-dependent pathway. With respect to regulation, the formation of the proteasomal ATPase ARC-20S proteasome complex, likely via the docking of the C-termini of ARC into the intersubunit pockets in the alpha-rings, may trigger opening of the gate for substrate entry. Interconversion between the open-gate and close-gate conformations leads to a dynamic regulation of the 20S proteasome proteolysis activity. Its function is as follows. Component of the proteasome core, a large protease complex with broad specificity involved in protein degradation. In Nocardia farcinica (strain IFM 10152), this protein is Proteasome subunit alpha.